The primary structure comprises 126 residues: Large-conductance mechanosensitive channel (126 aa).

2 consecutive transmembrane segments (helical) span residues 14-34 (VLDL…VKSL) and 69-89 (GAFL…FLLV).

The protein belongs to the MscL family. In terms of assembly, homopentamer.

The protein localises to the cell membrane. Functionally, channel that opens in response to stretch forces in the membrane lipid bilayer. May participate in the regulation of osmotic pressure changes within the cell. This Leuconostoc citreum (strain KM20) protein is Large-conductance mechanosensitive channel.